A 175-amino-acid chain; its full sequence is Gamma-crystallin B (175 aa).

Beta/gamma crystallin 'Greek key' domains lie at 2 to 40 (GKIT…RVDS) and 41 to 83 (GCWM…RLIP). The interval 84-88 (QHSGT) is connecting peptide. Beta/gamma crystallin 'Greek key' domains follow at residues 89 to 129 (FRMR…NVLD) and 130 to 172 (GCWV…RRVM).

Belongs to the beta/gamma-crystallin family. In terms of assembly, monomer.

Its function is as follows. Crystallins are the dominant structural components of the vertebrate eye lens. The sequence is that of Gamma-crystallin B (CRYGB) from Canis lupus familiaris (Dog).